We begin with the raw amino-acid sequence, 147 residues long: Hemoglobin subunit beta (147 aa).

An N-acetylvaline modification is found at valine 2. The region spanning 3–147 is the Globin domain; sequence HLTAEEKSAV…VANALAHKYH (145 aa). Threonine 13 is subject to Phosphothreonine. Residue serine 45 is modified to Phosphoserine. Lysine 60 is modified (N6-acetyllysine). Histidine 64 provides a ligand contact to heme b. An N6-acetyllysine modification is found at lysine 83. Residue histidine 93 participates in heme b binding. Position 94 is an S-nitrosocysteine (cysteine 94). Lysine 145 carries the post-translational modification N6-acetyllysine.

The protein belongs to the globin family. In terms of assembly, heterotetramer of two alpha chains and two beta chains. Red blood cells.

Involved in oxygen transport from the lung to the various peripheral tissues. This is Hemoglobin subunit beta (HBB) from Sapajus apella (Brown-capped capuchin).